The sequence spans 409 residues: Evolutionarily conserved signaling intermediate in Toll pathway, mitochondrial (409 aa).

Residues 1–26 (MLRRAQCLLRLHGNGGHSLVSRFRNY) constitute a mitochondrion transit peptide. Disordered stretches follow at residues 27-53 (ATDE…NLPA) and 383-409 (EEIE…SRQK). Residues 400–409 (QDEHISSRQK) are compositionally biased toward basic and acidic residues.

This sequence belongs to the ECSIT family. In terms of assembly, interacts with Traf6. Associates with mitochondrial complex I assembly intermediates during its biogenesis.

Its subcellular location is the cytoplasm. The protein localises to the nucleus. It localises to the mitochondrion. In terms of biological role, as part of the MCIA complex, involved in the assembly of the mitochondrial complex I. Involved in the innate immune response; promotes the production of antibacterial peptides. This is Evolutionarily conserved signaling intermediate in Toll pathway, mitochondrial from Drosophila melanogaster (Fruit fly).